We begin with the raw amino-acid sequence, 110 residues long: BolA-like protein 3 (110 aa).

Belongs to the BolA/IbaG family. Interacts with NFU1.

The protein resides in the mitochondrion. Acts as a mitochondrial iron-sulfur (Fe-S) cluster assembly factor that facilitates (Fe-S) cluster insertion into a subset of mitochondrial proteins. Probably acts together with NFU1. The polypeptide is BolA-like protein 3 (Bola3) (Mus musculus (Mouse)).